The chain runs to 100 residues: Urease subunit gamma (100 aa).

The protein belongs to the urease gamma subunit family. As to quaternary structure, heterotrimer of UreA (gamma), UreB (beta) and UreC (alpha) subunits. Three heterotrimers associate to form the active enzyme.

It is found in the cytoplasm. The enzyme catalyses urea + 2 H2O + H(+) = hydrogencarbonate + 2 NH4(+). It participates in nitrogen metabolism; urea degradation; CO(2) and NH(3) from urea (urease route): step 1/1. The protein is Urease subunit gamma of Staphylococcus xylosus.